The chain runs to 121 residues: Large ribosomal subunit protein bL12 (121 aa).

Belongs to the bacterial ribosomal protein bL12 family. Homodimer. Part of the ribosomal stalk of the 50S ribosomal subunit. Forms a multimeric L10(L12)X complex, where L10 forms an elongated spine to which 2 to 4 L12 dimers bind in a sequential fashion. Binds GTP-bound translation factors.

Its function is as follows. Forms part of the ribosomal stalk which helps the ribosome interact with GTP-bound translation factors. Is thus essential for accurate translation. The sequence is that of Large ribosomal subunit protein bL12 from Lactococcus lactis subsp. lactis (strain IL1403) (Streptococcus lactis).